A 226-amino-acid chain; its full sequence is Enolase-phosphatase E1 (226 aa).

Belongs to the HAD-like hydrolase superfamily. MasA/MtnC family. In terms of assembly, monomer. The cofactor is Mg(2+).

The catalysed reaction is 5-methylsulfanyl-2,3-dioxopentyl phosphate + H2O = 1,2-dihydroxy-5-(methylsulfanyl)pent-1-en-3-one + phosphate. Its pathway is amino-acid biosynthesis; L-methionine biosynthesis via salvage pathway; L-methionine from S-methyl-5-thio-alpha-D-ribose 1-phosphate: step 3/6. The protein operates within amino-acid biosynthesis; L-methionine biosynthesis via salvage pathway; L-methionine from S-methyl-5-thio-alpha-D-ribose 1-phosphate: step 4/6. Its function is as follows. Bifunctional enzyme that catalyzes the enolization of 2,3-diketo-5-methylthiopentyl-1-phosphate (DK-MTP-1-P) into the intermediate 2-hydroxy-3-keto-5-methylthiopentenyl-1-phosphate (HK-MTPenyl-1-P), which is then dephosphorylated to form the acireductone 1,2-dihydroxy-3-keto-5-methylthiopentene (DHK-MTPene). This Shewanella frigidimarina (strain NCIMB 400) protein is Enolase-phosphatase E1.